A 157-amino-acid chain; its full sequence is Ribonuclease H (157 aa).

The RNase H type-1 domain occupies 1 to 142; the sequence is MKKKIKIFID…CDFLAKISAK (142 aa). Aspartate 10, glutamate 48, aspartate 70, and aspartate 134 together coordinate Mg(2+).

Belongs to the RNase H family. As to quaternary structure, monomer. Mg(2+) is required as a cofactor.

The protein resides in the cytoplasm. The catalysed reaction is Endonucleolytic cleavage to 5'-phosphomonoester.. Its function is as follows. Endonuclease that specifically degrades the RNA of RNA-DNA hybrids. The protein is Ribonuclease H of Wigglesworthia glossinidia brevipalpis.